Here is a 61-residue protein sequence, read N- to C-terminus: Double gene block protein 1 (61 aa).

A disordered region spans residues 15–45 (LAGNRGKQKTRRSVAKDAIRKPASDSTNGGN). The interval 17-35 (GNRGKQKTRRSVAKDAIRK) is RNA-binding. Residues 28–37 (VAKDAIRKPA) are compositionally biased toward basic and acidic residues.

This sequence belongs to the carmovirus double gene block protein 1 family. As to quaternary structure, homodimer.

In terms of biological role, cell-to-cell movement. Displays RNA-binding activity. The chain is Double gene block protein 1 from Carnation mottle virus (isolate China/Shanghai) (CarMV).